Reading from the N-terminus, the 713-residue chain is Serine/threonine-protein kinase SSN3 (713 aa).

The region spanning 66 to 484 (YTILGFLSSG…ANQALEHAWF (419 aa)) is the Protein kinase domain. Residue 72–80 (LSSGTYGRV) coordinates ATP. The segment covering 104 to 120 (NAGTGSGTATVGSGAST) has biased composition (low complexity). A disordered region spans residues 104–188 (NAGTGSGTAT…GGSDNTLQLS (85 aa)). A compositionally biased stretch (polar residues) spans 129–142 (QQHQLLDSPSSSLH). Residues 158–175 (GTPSASPSLSASLGTSTA) show a composition bias toward low complexity. Residue Lys201 coordinates ATP. The active-site Proton acceptor is Asp304. Residues 657 to 672 (SNPATVRSSHSIGSTE) show a composition bias toward polar residues. The interval 657-713 (SNPATVRSSHSIGSTESITPTTSSQPIPAQPSSAPLARTTNLVATATRNQQRKRQRN) is disordered. Positions 673–691 (SITPTTSSQPIPAQPSSAP) are enriched in low complexity. Polar residues predominate over residues 694 to 705 (RTTNLVATATRN).

This sequence belongs to the protein kinase superfamily. CMGC Ser/Thr protein kinase family. CDC2/CDKX subfamily. As to quaternary structure, component of the srb8-11 complex, a regulatory module of the Mediator complex. The cofactor is Mg(2+).

The protein resides in the nucleus. The enzyme catalyses L-seryl-[protein] + ATP = O-phospho-L-seryl-[protein] + ADP + H(+). The catalysed reaction is L-threonyl-[protein] + ATP = O-phospho-L-threonyl-[protein] + ADP + H(+). It catalyses the reaction [DNA-directed RNA polymerase] + ATP = phospho-[DNA-directed RNA polymerase] + ADP + H(+). Functionally, component of the srb8-11 complex. The srb8-11 complex is a regulatory module of the Mediator complex which is itself dependent transcription. The srb8-11 complex may be involved in the transcriptional repression of a subset of genes regulated by Mediator. It may inhibit the association of the Mediator complex with RNA polymerase II to form the holoenzyme complex. The srb8-11 complex phosphorylates the C-terminal domain (CTD) of the largest subunit of RNA polymerase II. The sequence is that of Serine/threonine-protein kinase SSN3 (SSN3) from Mycosarcoma maydis (Corn smut fungus).